A 703-amino-acid chain; its full sequence is UvrABC system protein B (703 aa).

Positions 33–190 (TRIENGENDV…RRFVAMQYKR (158 aa)) constitute a Helicase ATP-binding domain. 46-53 (GATGTGKT) provides a ligand contact to ATP. The short motif at 99 to 122 (YYDYYQPEAYIPQTDTYIEKDSNI) is the Beta-hairpin element. The 154-residue stretch at 436–589 (QIDDLLAEIK…QIAYNQEHGI (154 aa)) folds into the Helicase C-terminal domain. A UVR domain is found at 659–694 (ADLIRQLSEQMHTAAEQLQFELAARLRDEIRDLKKE).

The protein belongs to the UvrB family. Forms a heterotetramer with UvrA during the search for lesions. Interacts with UvrC in an incision complex.

It is found in the cytoplasm. The UvrABC repair system catalyzes the recognition and processing of DNA lesions. A damage recognition complex composed of 2 UvrA and 2 UvrB subunits scans DNA for abnormalities. Upon binding of the UvrA(2)B(2) complex to a putative damaged site, the DNA wraps around one UvrB monomer. DNA wrap is dependent on ATP binding by UvrB and probably causes local melting of the DNA helix, facilitating insertion of UvrB beta-hairpin between the DNA strands. Then UvrB probes one DNA strand for the presence of a lesion. If a lesion is found the UvrA subunits dissociate and the UvrB-DNA preincision complex is formed. This complex is subsequently bound by UvrC and the second UvrB is released. If no lesion is found, the DNA wraps around the other UvrB subunit that will check the other stand for damage. The polypeptide is UvrABC system protein B (Bifidobacterium longum subsp. infantis (strain ATCC 15697 / DSM 20088 / JCM 1222 / NCTC 11817 / S12)).